We begin with the raw amino-acid sequence, 243 residues long: Adenine phosphoribosyltransferase 1, chloroplastic (243 aa).

A chloroplast-targeting transit peptide spans 1–52 (MQTIIISPLVSHRLCLARAVPCNRLLNNHHRAPPSIRLSNHRSTTSLRLFSS). Glutamine 2 is subject to N-acetylalanine.

The protein belongs to the purine/pyrimidine phosphoribosyltransferase family. In terms of assembly, homodimer.

Its subcellular location is the plastid. The protein localises to the chloroplast. The protein resides in the cytoplasm. The enzyme catalyses AMP + diphosphate = 5-phospho-alpha-D-ribose 1-diphosphate + adenine. It functions in the pathway purine metabolism; AMP biosynthesis via salvage pathway; AMP from adenine: step 1/1. Its function is as follows. Catalyzes a salvage reaction resulting in the formation of AMP, that is energically less costly than de novo synthesis. Contributes primarily to the recycling of adenine into adenylate nucleotides, but is also involved in the inactivation of cytokinins by phosphoribosylation. Catalyzes the conversion of cytokinins from free bases (active form) to the corresponding nucleotides (inactive form). The protein is Adenine phosphoribosyltransferase 1, chloroplastic (APT1) of Arabidopsis thaliana (Mouse-ear cress).